Reading from the N-terminus, the 779-residue chain is Probable ATP-dependent RNA helicase DHX40 (779 aa).

Positions 1–28 (MSRFPAVAGRAPRRQEEGERSRDLQEER) are disordered. Basic and acidic residues predominate over residues 13 to 28 (RRQEEGERSRDLQEER). A Helicase ATP-binding domain is found at 63–231 (IQAVRDNSFL…FGNCPIFDIP (169 aa)). An ATP-binding site is contributed by 76 to 83 (GNTGSGKT). A DEAH box motif is present at residues 173 to 176 (DEAH). Residues 263 to 442 (TMDIHLNEMA…SVVLTLKCLA (180 aa)) enclose the Helicase C-terminal domain. The disordered stretch occupies residues 737–779 (SKDVLKKMQRRNDDKSISDARARFLERKQQRTQDHSDTRKETG).

It belongs to the DEAD box helicase family. DEAH subfamily. In terms of tissue distribution, ubiquitously expressed.

It catalyses the reaction ATP + H2O = ADP + phosphate + H(+). In terms of biological role, probable ATP-dependent RNA helicase. This Homo sapiens (Human) protein is Probable ATP-dependent RNA helicase DHX40 (DHX40).